A 179-amino-acid chain; its full sequence is NAD(P)H-quinone oxidoreductase subunit I, chloroplastic (179 aa).

4Fe-4S ferredoxin-type domains lie at 55-84 (GRIHFEFDKCIACEVCVRVCPIDLPVVDWR) and 95-124 (LNYSIDFGICIFCGNCVEYCPTNCLSMTEE). Residues cysteine 64, cysteine 67, cysteine 70, cysteine 74, cysteine 104, cysteine 107, cysteine 110, and cysteine 114 each coordinate [4Fe-4S] cluster.

The protein belongs to the complex I 23 kDa subunit family. As to quaternary structure, NDH is composed of at least 16 different subunits, 5 of which are encoded in the nucleus. [4Fe-4S] cluster serves as cofactor.

It is found in the plastid. The protein resides in the chloroplast thylakoid membrane. The enzyme catalyses a plastoquinone + NADH + (n+1) H(+)(in) = a plastoquinol + NAD(+) + n H(+)(out). It carries out the reaction a plastoquinone + NADPH + (n+1) H(+)(in) = a plastoquinol + NADP(+) + n H(+)(out). Functionally, NDH shuttles electrons from NAD(P)H:plastoquinone, via FMN and iron-sulfur (Fe-S) centers, to quinones in the photosynthetic chain and possibly in a chloroplast respiratory chain. The immediate electron acceptor for the enzyme in this species is believed to be plastoquinone. Couples the redox reaction to proton translocation, and thus conserves the redox energy in a proton gradient. In Nymphaea alba (White water-lily), this protein is NAD(P)H-quinone oxidoreductase subunit I, chloroplastic.